The primary structure comprises 85 residues: Double gene block protein 2 (85 aa).

Residues 1 to 2 (MK) are Lumenal-facing. The helical transmembrane segment at 3-23 (VLLVTGVLGLLLLIKWKSQST) threads the bilayer. At 24-36 (STSNQTCQCPTSP) the chain is on the cytoplasmic side. A helical transmembrane segment spans residues 37 to 56 (WVIYAFYNSLSLVLLLCHLI). The Lumenal portion of the chain corresponds to 57–85 (PEIKPIHTSYNTHDSSKQQHISINTGNGK).

It belongs to the carmovirus double gene block protein 2 family.

The protein resides in the host endoplasmic reticulum membrane. In terms of biological role, cell-to-cell movement function. This Turnip crinkle virus (TCV) protein is Double gene block protein 2.